We begin with the raw amino-acid sequence, 71 residues long: Gas vesicle protein A (71 aa).

The protein belongs to the gas vesicle GvpA family. As to quaternary structure, the gas vesicle shell is 2 nm thick and consists of a single layer of this protein. It forms helical ribs nearly perpendicular to the long axis of the vesicle.

Its subcellular location is the gas vesicle shell. Functionally, gas vesicles are hollow, gas filled proteinaceous nanostructures found in some microorganisms. During planktonic growth they allow positioning of the organism at a favorable depth for light or nutrient acquisition. GvpA forms the protein shell. Cluster expression in E.coli (gvpA1-gvpA2-gvpC-gvpN-gvpJ-gvpK-gvpF-gvpG-gvpV-gvpW) allows cells to float and produces irregularly shaped gas vesicles. This Nostoc sp. (strain PCC 7120 / SAG 25.82 / UTEX 2576) protein is Gas vesicle protein A.